The primary structure comprises 117 residues: Transcription elongation factor SPT4 (117 aa).

Residues 1-40 (MSLETVPKDLRHLRACLLCSLVKTIDQFEYDGCDNCESYL) form an interaction with SUPT5H region. A C4-type zinc finger spans residues 16-36 (CLLCSLVKTIDQFEYDGCDNC).

It belongs to the SPT4 family. In terms of assembly, interacts with SUPT5H to form the DSIF complex. DSIF interacts with RNA polymerase II and with the positive transcription elongation factor b complex (P-TEFb complex), which is composed of CDK9 and cyclin-T.

The protein resides in the nucleus. In terms of biological role, may function as a component of the DRB sensitivity-inducing factor complex (DSIF complex), which regulates transcription elongation by RNA polymerase II. Probably enhances transcriptional pausing at sites proximal to the promoter, which may facilitate the assembly of an elongation competent RNA polymerase II complex. Also acts to stimulate transcriptional elongation at low nucleotide concentrations. Regulation of transcriptional elongation by this protein is required for the expression of genes which control neuronal development. The chain is Transcription elongation factor SPT4 (supt4h1) from Danio rerio (Zebrafish).